Reading from the N-terminus, the 440-residue chain is Glycerol-3-phosphate dehydrogenase [NAD(+)] 2, mitochondrial (440 aa).

The N-terminal 16 residues, 1-16 (MLAVRRLTRYTFLKRT), are a transit peptide targeting the mitochondrion. Phosphoserine is present on residues Ser-70, Ser-72, and Ser-75. NAD(+)-binding positions include 90–95 (GSGNWG), Phe-122, and Phe-178. Substrate is bound at residue Lys-201. Position 234 (Ala-234) interacts with NAD(+). Lys-294 functions as the Proton acceptor in the catalytic mechanism. Arg-359 and Gln-388 together coordinate NAD(+). 359–360 (RN) serves as a coordination point for substrate.

This sequence belongs to the NAD-dependent glycerol-3-phosphate dehydrogenase family.

It localises to the cytoplasm. Its subcellular location is the mitochondrion. The enzyme catalyses sn-glycerol 3-phosphate + NAD(+) = dihydroxyacetone phosphate + NADH + H(+). Catalyzes the production of glycerol under anaerobic growth conditions. Glycerol production serves as a redox sink by consuming the excess cytosolic NADH during anaerobic metabolism. In Saccharomyces cerevisiae (strain ATCC 204508 / S288c) (Baker's yeast), this protein is Glycerol-3-phosphate dehydrogenase [NAD(+)] 2, mitochondrial.